Consider the following 196-residue polypeptide: DnaA initiator-associating protein DiaA (196 aa).

The region spanning 34 to 196 is the SIS domain; sequence LVQSLLNGNK…DNTLFPHQDD (163 aa).

It belongs to the SIS family. DiaA subfamily. In terms of assembly, homotetramer; dimer of dimers.

Required for the timely initiation of chromosomal replication via direct interactions with the DnaA initiator protein. The sequence is that of DnaA initiator-associating protein DiaA from Klebsiella pneumoniae (strain 342).